Here is a 451-residue protein sequence, read N- to C-terminus: uncharacterized protein (451 aa).

The signal sequence occupies residues 1-18; sequence MRTRITLALAVLLLLLAG. Cysteine 19 carries N-palmitoyl cysteine lipidation. A lipid anchor (S-diacylglycerol cysteine) is attached at cysteine 19. Residues 424–451 form a disordered region; that stretch reads TSADPPPGVPRAGKRNIRDATSRLPSTP.

The protein localises to the cell membrane. Its function is as follows. May participate in oleandomycin glycosylation and secretion during antibiotic production. This is an uncharacterized protein from Streptomyces antibioticus.